The chain runs to 48 residues: Delta-stichotoxin-She1a (48 aa).

Cystine bridges form between Cys3/Cys43, Cys5/Cys33, and Cys26/Cys44.

It belongs to the sea anemone sodium channel inhibitory toxin family. Type II subfamily.

The protein resides in the secreted. It is found in the nematocyst. Functionally, binds specifically to voltage-gated sodium channels (Nav), thereby delaying their inactivation during signal transduction. Is highly toxic to crabs (by intrahemocoelic injection), but without effect upon mice (by intraperitoneal injection). The protein is Delta-stichotoxin-She1a of Stichodactyla helianthus (Sun anemone).